The chain runs to 373 residues: MATSASSHLNKGIKQVYMSLPQGEKVQAMYIWIDGTGEGLRCKTRTLDSEPKCIEELPEWNFDGSSTFQSEGSNSDMYLVPAAMFRDPFRKDPNKLVFCEVFKYNRKPAETNLRHTCKRIMDMVSNQHPWFGMEQEYTLMGTDGHPFGWPSNGFPGPQGPYYCGVGADKAYGRDIVEAHYRACLYAGIKIGGTNAEVMPAQWEFQIGPCEGIDMGDHLWVARFILHRVCEDFGVIATFDPKPIPGNWNGAGCHTNFSTKAMREENGLKYIEEAIEKLSKRHQYHIRAYDPKGGLDNTRRLTGFHETSNINDFSAGVANRGASIRIPRTGGQEKKGYFEDRRPSANCDPFAVTEALIRTCLLNETGDEPFQYKN.

At Ala-2 the chain carries N-acetylalanine. Residues 2-25 (ATSASSHLNKGIKQVYMSLPQGEK) form a required for glutamine-induced ubiquitination by CRL4(CRBN) and proteasomal degradation region. 2 positions are modified to N6-acetyllysine: Lys-11 and Lys-14. The GS beta-grasp domain maps to 24 to 106 (EKVQAMYIWI…VFCEVFKYNR (83 aa)). The residue at position 104 (Tyr-104) is a Phosphotyrosine. The region spanning 113–373 (LRHTCKRIMD…TGDEPFQYKN (261 aa)) is the GS catalytic domain. Glu-134 provides a ligand contact to ATP. The Mn(2+) site is built by Glu-134, Glu-136, Glu-196, and Glu-203. An ATP-binding site is contributed by 203-208 (EFQIGP). 246–247 (NW) serves as a coordination point for L-glutamate. Position 253 (His-253) interacts with Mn(2+). ATP is bound by residues 255-257 (NFS), Arg-319, and Arg-324. Arg-319 contacts L-glutamate. 336 to 338 (YFE) contacts ADP. Residue Glu-338 participates in Mn(2+) binding. Arg-340 is a binding site for L-glutamate. Position 343 is a phosphoserine (Ser-343).

Belongs to the glutamine synthetase family. Decamer; composed of two pentamers. Interacts with PALMD. Interacts with RHOJ. Interacts with BEST2; this interaction tethers a fraction of GLUL to the membrane, causing a decrease of cytosolic glutamine synthase (GS) activity and inhibits the chloride channel activity of BEST2 by affecting the gating at the aperture in the absence of intracellular glutamate. It depends on Mg(2+) as a cofactor. The cofactor is Mn(2+). In terms of processing, palmitoylated; undergoes autopalmitoylation. Acetylated by EP300/p300; acetylation is stimulated by increased glutamine levels and promotes ubiquitin-mediated proteasomal degradation. Post-translationally, ubiquitinated by ZNRF1. Ubiquitinated by the DCX (DDB1-CUL4-X-box) E3 ubiquitin-protein ligase complex called CRL4(CRBN), leading to proteasomal degradation.

Its subcellular location is the cytoplasm. It is found in the cytosol. The protein localises to the microsome. The protein resides in the mitochondrion. It localises to the cell membrane. The catalysed reaction is L-glutamate + NH4(+) + ATP = L-glutamine + ADP + phosphate + H(+). It catalyses the reaction L-cysteinyl-[protein] + hexadecanoyl-CoA = S-hexadecanoyl-L-cysteinyl-[protein] + CoA. Its activity is regulated as follows. Glutamine synthetase activity is inhibited by methionine sulfoximine (MSO). Its function is as follows. Glutamine synthetase that catalyzes the ATP-dependent conversion of glutamate and ammonia to glutamine. Its role depends on tissue localization: in the brain, it regulates the levels of toxic ammonia and converts neurotoxic glutamate to harmless glutamine, whereas in the liver, it is one of the enzymes responsible for the removal of ammonia. Plays a key role in ammonium detoxification during erythropoiesis: the glutamine synthetase activity is required to remove ammonium generated by porphobilinogen deaminase (HMBS) during heme biosynthesis to prevent ammonium accumulation and oxidative stress. Essential for proliferation of fetal skin fibroblasts. Independently of its glutamine synthetase activity, required for endothelial cell migration during vascular development. Involved in angiogenesis by regulating membrane localization and activation of the GTPase RHOJ, possibly by promoting RHOJ palmitoylation. May act as a palmitoyltransferase for RHOJ: able to autopalmitoylate and then transfer the palmitoyl group to RHOJ. Plays a role in ribosomal 40S subunit biogenesis. Through the interaction with BEST2, inhibits BEST2 channel activity by affecting the gating at the aperture in the absence of intracellular L-glutamate, but sensitizes BEST2 to intracellular L-glutamate, which promotes the opening of BEST2 and thus relieves its inhibitory effect on BEST2. In Sus scrofa (Pig), this protein is Glutamine synthetase.